The primary structure comprises 196 residues: Imidazoleglycerol-phosphate dehydratase (196 aa).

It belongs to the imidazoleglycerol-phosphate dehydratase family.

Its subcellular location is the cytoplasm. It carries out the reaction D-erythro-1-(imidazol-4-yl)glycerol 3-phosphate = 3-(imidazol-4-yl)-2-oxopropyl phosphate + H2O. It functions in the pathway amino-acid biosynthesis; L-histidine biosynthesis; L-histidine from 5-phospho-alpha-D-ribose 1-diphosphate: step 6/9. This is Imidazoleglycerol-phosphate dehydratase from Solidesulfovibrio magneticus (strain ATCC 700980 / DSM 13731 / RS-1) (Desulfovibrio magneticus).